We begin with the raw amino-acid sequence, 145 residues long: Small ribosomal subunit protein uS9 (145 aa).

Polar residues predominate over residues 1–13; that stretch reads MATDQHSNKSNVS. The interval 1-24 is disordered; it reads MATDQHSNKSNVSAARKPLSPSPT.

Belongs to the universal ribosomal protein uS9 family.

The protein localises to the cytoplasm. In Lupinus polyphyllus (Large-leaved lupine), this protein is Small ribosomal subunit protein uS9 (RPS16).